A 551-amino-acid chain; its full sequence is Glucans biosynthesis protein D (551 aa).

Residues 1–32 (MDRRRFIKGSMAMAAVCGTSGIASLFSQAAFA) constitute a signal peptide (tat-type signal).

This sequence belongs to the OpgD/OpgG family. Post-translationally, predicted to be exported by the Tat system. The position of the signal peptide cleavage has not been experimentally proven.

It is found in the periplasm. It functions in the pathway glycan metabolism; osmoregulated periplasmic glucan (OPG) biosynthesis. Its function is as follows. Probably involved in the control of the structural glucose backbone of osmoregulated periplasmic glucans (OPGs). The chain is Glucans biosynthesis protein D from Escherichia coli O1:K1 / APEC.